We begin with the raw amino-acid sequence, 388 residues long: MNLHEYQAKSLFAEYGLPVSEGFACDTAQEAVEAAGRIGGNLWVVKCQVHAGGRGKAGGVKVTGDKEEIRAFAEHWLGKNLVTYQTDEKGQPVAKILVESCTDIANELYLGAVVDRATRRVVFMASTEGGVEIEKVAEETPELIHKAIIDPLTGPQPYQARDLGFKLGLNPTQMKQFTKIFMGLATMFVDHDFALLEINPLVITTEGNLHCLDGKIGIDGNALFRQAKIKAMHDPSQDDAREAHAAMFELNYVALDGNVGCMVNGAGLAMGTMDIVNLHGGKPANFLDVGGGATKERVAEAFKIILSDSNVKAVLVNIFGGIVRCDMIAEGIIGAVKEVGVKVPVVVRLEGTNAELGREVLAKSGLDIIAANSLTDAAEQVVKAAEGK.

One can recognise an ATP-grasp domain in the interval 9-244; that stretch reads KSLFAEYGLP…PSQDDAREAH (236 aa). ATP is bound by residues K46, 53–55, E99, T102, and E107; that span reads GRG. The Mg(2+) site is built by N199 and D213. Residues N264 and 321–323 contribute to the substrate site; that span reads GIV.

This sequence belongs to the succinate/malate CoA ligase beta subunit family. Heterotetramer of two alpha and two beta subunits. Mg(2+) serves as cofactor.

It carries out the reaction succinate + ATP + CoA = succinyl-CoA + ADP + phosphate. The enzyme catalyses GTP + succinate + CoA = succinyl-CoA + GDP + phosphate. It participates in carbohydrate metabolism; tricarboxylic acid cycle; succinate from succinyl-CoA (ligase route): step 1/1. Succinyl-CoA synthetase functions in the citric acid cycle (TCA), coupling the hydrolysis of succinyl-CoA to the synthesis of either ATP or GTP and thus represents the only step of substrate-level phosphorylation in the TCA. The beta subunit provides nucleotide specificity of the enzyme and binds the substrate succinate, while the binding sites for coenzyme A and phosphate are found in the alpha subunit. The chain is Succinate--CoA ligase [ADP-forming] subunit beta from Shewanella sp. (strain ANA-3).